The primary structure comprises 418 residues: Magnesium-chelatase subunit ChlI-2, chloroplastic (418 aa).

A chloroplast-targeting transit peptide spans 1-55 (MASLLGRSPSSILTCPRISSPSSTSSMSHLCFGPEKLSGRIQFNPKKNRSRYHVS). At Val-56 the chain carries N-acetylvaline. 2 disulfide bridges follow: Cys-96-Cys-187 and Cys-348-Cys-390. 113–120 (GDRGTGKS) provides a ligand contact to ATP.

It belongs to the Mg-chelatase subunits D/I family. The magnesium chelatase complex is a heterotrimer consisting of subunits CHLI, CHLD and CHLH. In terms of tissue distribution, expressed in leaves.

It localises to the plastid. The protein localises to the chloroplast. The enzyme catalyses protoporphyrin IX + Mg(2+) + ATP + H2O = Mg-protoporphyrin IX + ADP + phosphate + 3 H(+). Its pathway is porphyrin-containing compound metabolism; chlorophyll biosynthesis. Its activity is regulated as follows. Redox regulation; active in reducing conditions, inactive in oxidizing conditions. Thioredoxins f and m mediate the reversible reductive activation of oxidized CHLI2. Functionally, involved in chlorophyll biosynthesis. Catalyzes the insertion of magnesium ion into protoporphyrin IX to yield Mg-protoporphyrin IX. The reaction takes place in two steps, with an ATP-dependent activation followed by an ATP-dependent chelation step. Possesses low affinity for ATP and may play a limited role in chlorophyll biosynthesis, and contributes to the assembly of the Mg-chelatase complex. This is Magnesium-chelatase subunit ChlI-2, chloroplastic (CHLI2) from Arabidopsis thaliana (Mouse-ear cress).